The sequence spans 694 residues: Elongation factor G (694 aa).

Residues 8-282 (KDYRNIGIMA…AVIDYLPSPV (275 aa)) form the tr-type G domain. Residues 17-24 (AHIDAGKT), 81-85 (DTPGH), and 135-138 (NKMD) contribute to the GTP site.

Belongs to the TRAFAC class translation factor GTPase superfamily. Classic translation factor GTPase family. EF-G/EF-2 subfamily.

Its subcellular location is the cytoplasm. In terms of biological role, catalyzes the GTP-dependent ribosomal translocation step during translation elongation. During this step, the ribosome changes from the pre-translocational (PRE) to the post-translocational (POST) state as the newly formed A-site-bound peptidyl-tRNA and P-site-bound deacylated tRNA move to the P and E sites, respectively. Catalyzes the coordinated movement of the two tRNA molecules, the mRNA and conformational changes in the ribosome. This Mesomycoplasma hyopneumoniae (strain J / ATCC 25934 / NCTC 10110) (Mycoplasma hyopneumoniae) protein is Elongation factor G.